The primary structure comprises 289 residues: MRKFAAFACGTGAGFAAYYFQKLRDPLQVVHNSWTNSERHISECALWDSNWDYRDPKSLARPMKNDKPQEQNRYNADLEKNVSKYARHIILIRHGEYLDVGETDETHHLTDRGRLQAKYTGKRLHELGIKWDKVIASNMVRAQETAEIILNEIDFDKTKVKSCSYLREGAPIPPQPPVGHWKPEASQFFRDGARIEAAFRRYFHRALPDQEKDSYTLIVGHGNVIRYFVCRALQFPAEGWLRININHASITWLTISPSGNVSIKYLGDTGFIPAKHLTNRIPREAKNVV.

This sequence belongs to the phosphoglycerate mutase family. BPG-dependent PGAM subfamily. Interacts with Pk92B/ASK1.

The protein resides in the mitochondrion outer membrane. It catalyses the reaction O-phospho-L-seryl-[protein] + H2O = L-seryl-[protein] + phosphate. The enzyme catalyses O-phospho-L-threonyl-[protein] + H2O = L-threonyl-[protein] + phosphate. Displays phosphatase activity for serine/threonine residues, and dephosphorylates and activates Pk92B kinase. Has apparently no phosphoglycerate mutase activity. The sequence is that of Serine/threonine-protein phosphatase Pgam5, mitochondrial from Drosophila mojavensis (Fruit fly).